Here is an 862-residue protein sequence, read N- to C-terminus: Leucine--tRNA ligase (862 aa).

A 'HIGH' region motif is present at residues 51-61 (PYPSGSLHMGH). The 'KMSKS' region motif lies at 624–628 (KMSKS). Lysine 627 is an ATP binding site.

It belongs to the class-I aminoacyl-tRNA synthetase family.

The protein localises to the cytoplasm. It carries out the reaction tRNA(Leu) + L-leucine + ATP = L-leucyl-tRNA(Leu) + AMP + diphosphate. The sequence is that of Leucine--tRNA ligase from Prochlorococcus marinus (strain NATL1A).